Here is a 316-residue protein sequence, read N- to C-terminus: Cytochrome c oxidase assembly protein COX18, mitochondrial (316 aa).

A helical membrane pass occupies residues 164 to 184; that stretch reads WKNALLPMVQIPLWVTVSMGI. Residues 185–213 are Mitochondrial matrix-facing; the sequence is RTLTETQLIESFYPSWFSALGFSSFDLSS. Residues 214–234 traverse the membrane as a helical segment; it reads PLVAMPLLAPILVGTLAVLNV. Residues 235 to 274 are Mitochondrial intermembrane-facing; the sequence is ELNGRLMFSSSLSSQGIKTISRNSTRVQEAMTSILNVSRL. The chain crosses the membrane as a helical span at residues 275–295; that stretch reads GCVVMLAMSSQAPFLLSLYWI. Residues 296–316 are Mitochondrial matrix-facing; that stretch reads SSQLFSLVQNIILNWIYPYQR.

This sequence belongs to the OXA1/ALB3/YidC family. Interacts with PNT1 and MSS2.

It localises to the mitochondrion inner membrane. In terms of biological role, required for the insertion of integral membrane proteins into the mitochondrial inner membrane. Essential for the activity and assembly of cytochrome c oxidase. Plays a central role in the translocation and export of the C-terminal part of the COX2 protein into the mitochondrial intermembrane space. In Saccharomyces cerevisiae (strain ATCC 204508 / S288c) (Baker's yeast), this protein is Cytochrome c oxidase assembly protein COX18, mitochondrial (COX18).